The primary structure comprises 396 residues: Putative amidohydrolase YhaA (396 aa).

Aspartate 85 is a catalytic residue. Glutamate 143 (proton acceptor) is an active-site residue. Positions 144, 182, and 368 each coordinate Zn(2+).

The protein belongs to the peptidase M20A family. Requires Zn(2+) as cofactor. Co(2+) serves as cofactor.

This is Putative amidohydrolase YhaA (yhaA) from Bacillus subtilis (strain 168).